We begin with the raw amino-acid sequence, 1150 residues long: Alpha-mannosidase 2 (1150 aa).

Residues 1-5 (MKLSR) are Cytoplasmic-facing. Residues 6–26 (QFTVFGSAIFCVVIFSLYLML) traverse the membrane as a helical; Signal-anchor for type II membrane protein segment. At 27–1150 (DRGHLDYPRG…STFRIRLRWT (1124 aa)) the chain is on the lumenal side. A glycan (N-linked (GlcNAc...) asparagine) is linked at Asn-78. Phosphoserine occurs at positions 80 and 82. A glycan (N-linked (GlcNAc...) asparagine) is linked at Asn-93. Zn(2+) is bound by residues His-174, Asp-176, Asp-288, and His-568. Residue Asp-288 is the Nucleophile of the active site. A glycan (N-linked (GlcNAc...) asparagine) is linked at Asn-1129.

It belongs to the glycosyl hydrolase 38 family. Homodimer; disulfide-linked. The cofactor is Zn(2+). In terms of processing, glycosylated. All tissues, mostly in adrenal and thymus.

It is found in the golgi apparatus membrane. It catalyses the reaction N(4)-{beta-D-GlcNAc-(1-&gt;2)-alpha-D-Man-(1-&gt;3)-[alpha-D-Man-(1-&gt;3)-[alpha-D-Man-(1-&gt;6)]-alpha-D-Man-(1-&gt;6)]-beta-D-Man-(1-&gt;4)-beta-D-GlcNAc-(1-&gt;4)-beta-D-GlcNAc}-L-asparaginyl-[protein] + 2 H2O = 2 alpha-D-mannopyranose + an N(4)-{beta-D-GlcNAc-(1-&gt;2)-alpha-D-Man-(1-&gt;3)-[alpha-D-Man-(1-&gt;6)]-beta-D-Man-(1-&gt;4)-beta-D-GlcNAc-(1-&gt;4)-beta-D-GlcNAc}-L-asparaginyl-[protein]. Its pathway is protein modification; protein glycosylation. In terms of biological role, catalyzes the first committed step in the biosynthesis of complex N-glycans. It controls conversion of high mannose to complex N-glycans; the final hydrolytic step in the N-glycan maturation pathway. In Mus musculus (Mouse), this protein is Alpha-mannosidase 2 (Man2a1).